The following is a 382-amino-acid chain: Anhydro-N-acetylmuramic acid kinase (382 aa).

An ATP-binding site is contributed by 22–29 (GTSMDGVD).

Belongs to the anhydro-N-acetylmuramic acid kinase family.

It carries out the reaction 1,6-anhydro-N-acetyl-beta-muramate + ATP + H2O = N-acetyl-D-muramate 6-phosphate + ADP + H(+). The protein operates within amino-sugar metabolism; 1,6-anhydro-N-acetylmuramate degradation. Its pathway is cell wall biogenesis; peptidoglycan recycling. Functionally, catalyzes the specific phosphorylation of 1,6-anhydro-N-acetylmuramic acid (anhMurNAc) with the simultaneous cleavage of the 1,6-anhydro ring, generating MurNAc-6-P. Is required for the utilization of anhMurNAc either imported from the medium or derived from its own cell wall murein, and thus plays a role in cell wall recycling. This chain is Anhydro-N-acetylmuramic acid kinase, found in Burkholderia vietnamiensis (strain G4 / LMG 22486) (Burkholderia cepacia (strain R1808)).